The sequence spans 101 residues: Cilia- and flagella-associated protein 141 (101 aa).

Microtubule inner protein component of sperm flagellar doublet microtubules. Expressed in trachea multiciliated cells.

It localises to the cytoplasm. The protein localises to the cytoskeleton. Its subcellular location is the cilium axoneme. It is found in the flagellum axoneme. Its function is as follows. Microtubule inner protein (MIP) part of the dynein-decorated doublet microtubules (DMTs) in cilia axoneme, which is required for motile cilia beating. In Bos taurus (Bovine), this protein is Cilia- and flagella-associated protein 141.